The following is a 302-amino-acid chain: Oxygen-dependent coproporphyrinogen-III oxidase (302 aa).

Residue S94 coordinates substrate. A divalent metal cation-binding residues include H98 and H108. The active-site Proton donor is the H108. 110-112 (NVR) contacts substrate. The a divalent metal cation site is built by H147 and H177. The tract at residues 242–277 (YVEFNLVFDRGTLFGLQSGGRTESILMSMPPVANWR) is important for dimerization. Substrate is bound at residue 260 to 262 (GGR).

The protein belongs to the aerobic coproporphyrinogen-III oxidase family. As to quaternary structure, homodimer. Requires a divalent metal cation as cofactor.

The protein localises to the cytoplasm. It catalyses the reaction coproporphyrinogen III + O2 + 2 H(+) = protoporphyrinogen IX + 2 CO2 + 2 H2O. It participates in porphyrin-containing compound metabolism; protoporphyrin-IX biosynthesis; protoporphyrinogen-IX from coproporphyrinogen-III (O2 route): step 1/1. Its function is as follows. Involved in the heme biosynthesis. Catalyzes the aerobic oxidative decarboxylation of propionate groups of rings A and B of coproporphyrinogen-III to yield the vinyl groups in protoporphyrinogen-IX. In Ralstonia nicotianae (strain ATCC BAA-1114 / GMI1000) (Ralstonia solanacearum), this protein is Oxygen-dependent coproporphyrinogen-III oxidase.